We begin with the raw amino-acid sequence, 417 residues long: DNA-directed RNA polymerase subunit beta (417 aa).

The protein belongs to the RNA polymerase beta chain family. In plastids the minimal PEP RNA polymerase catalytic core is composed of four subunits: alpha, beta, beta', and beta''. When a (nuclear-encoded) sigma factor is associated with the core the holoenzyme is formed, which can initiate transcription.

The protein resides in the plastid. It is found in the chloroplast. It carries out the reaction RNA(n) + a ribonucleoside 5'-triphosphate = RNA(n+1) + diphosphate. In terms of biological role, DNA-dependent RNA polymerase catalyzes the transcription of DNA into RNA using the four ribonucleoside triphosphates as substrates. The sequence is that of DNA-directed RNA polymerase subunit beta (rpoB) from Saponaria officinalis (Common soapwort).